Here is a 192-residue protein sequence, read N- to C-terminus: uncharacterized protein (192 aa).

A Nudix hydrolase domain is found at 29 to 160; it reads HRQAAVLIPI…PLDIYRRGDS (132 aa). The short motif at 67–89 is the Nudix box element; that stretch reads GAVDDTDASVIAAALREAEEEVA. Mg(2+) contacts are provided by Glu-83 and Glu-87.

It belongs to the Nudix hydrolase family. PCD1 subfamily. Requires Mn(2+) as cofactor. It depends on Mg(2+) as a cofactor.

In terms of biological role, probably mediates the hydrolysis of some nucleoside diphosphate derivatives. This is an uncharacterized protein from Shigella boydii serotype 4 (strain Sb227).